The following is a 345-amino-acid chain: Biotin synthase (345 aa).

One can recognise a Radical SAM core domain in the interval 38–256; the sequence is GEVQVSTLLS…IAVARIMMPR (219 aa). [4Fe-4S] cluster contacts are provided by Cys53, Cys57, and Cys60. The [2Fe-2S] cluster site is built by Cys97, Cys128, Cys188, and Arg260.

Belongs to the radical SAM superfamily. Biotin synthase family. In terms of assembly, homodimer. [4Fe-4S] cluster is required as a cofactor. [2Fe-2S] cluster serves as cofactor.

It catalyses the reaction (4R,5S)-dethiobiotin + (sulfur carrier)-SH + 2 reduced [2Fe-2S]-[ferredoxin] + 2 S-adenosyl-L-methionine = (sulfur carrier)-H + biotin + 2 5'-deoxyadenosine + 2 L-methionine + 2 oxidized [2Fe-2S]-[ferredoxin]. The protein operates within cofactor biosynthesis; biotin biosynthesis; biotin from 7,8-diaminononanoate: step 2/2. Its function is as follows. Catalyzes the conversion of dethiobiotin (DTB) to biotin by the insertion of a sulfur atom into dethiobiotin via a radical-based mechanism. The chain is Biotin synthase from Sodalis glossinidius (strain morsitans).